The chain runs to 490 residues: Ribulose bisphosphate carboxylase large chain (490 aa).

Substrate is bound by residues asparagine 127 and threonine 177. Lysine 179 serves as the catalytic Proton acceptor. Lysine 181 lines the substrate pocket. Lysine 205, aspartate 207, and glutamate 208 together coordinate Mg(2+). An N6-carboxylysine modification is found at lysine 205. Histidine 297 serves as the catalytic Proton acceptor. Residues arginine 298, histidine 330, and serine 382 each contribute to the substrate site.

It belongs to the RuBisCO large chain family. Type I subfamily. Heterohexadecamer of 8 large chains and 8 small chains. Requires Mg(2+) as cofactor.

It is found in the plastid. It localises to the chloroplast. The catalysed reaction is 2 (2R)-3-phosphoglycerate + 2 H(+) = D-ribulose 1,5-bisphosphate + CO2 + H2O. It carries out the reaction D-ribulose 1,5-bisphosphate + O2 = 2-phosphoglycolate + (2R)-3-phosphoglycerate + 2 H(+). In terms of biological role, ruBisCO catalyzes two reactions: the carboxylation of D-ribulose 1,5-bisphosphate, the primary event in carbon dioxide fixation, as well as the oxidative fragmentation of the pentose substrate in the photorespiration process. Both reactions occur simultaneously and in competition at the same active site. This Thalassiosira nordenskioeldii (Marine diatom) protein is Ribulose bisphosphate carboxylase large chain.